The following is a 533-amino-acid chain: Undecaprenyl phosphate-alpha-4-amino-4-deoxy-L-arabinose arabinosyl transferase (533 aa).

The next 13 helical transmembrane spans lie at 10 to 30 (LLLAAFLLAYLLPLGFHGLWI), 64 to 84 (PAGYWLIALGQAVFGENLFGV), 86 to 106 (IASAISTGLSVLLAYLLAGKI), 113 to 133 (SFASALLFMSFGFVAGQAGYS), 137 to 157 (PQFTLWTNLTLVAFWYAVHSI), 170 to 190 (VACGMGFMTKGFLAWALPAII), 207 to 227 (FGPLAVVIAIAVCLPWALAVH), 257 to 277 (WWFYLPLLIAACLPWALLLPV), 290 to 310 (DTAFLLLWLVLPLAFLSLSKG), 312 to 332 (LPTYILPCLLPLALLMADALV), 345 to 365 (VNGIVNAALTFLGLLALIYVQ), 377 to 397 (HLLLAVIVLTGWTLTNALQGI), and 402 to 422 (FWALPAVGSWLLIVLLPAALP).

This sequence belongs to the glycosyltransferase 83 family.

The protein resides in the cell inner membrane. The catalysed reaction is 4-amino-4-deoxy-alpha-L-arabinopyranosyl di-trans,octa-cis-undecaprenyl phosphate + lipid IVA = lipid IIA + di-trans,octa-cis-undecaprenyl phosphate.. Its pathway is lipopolysaccharide metabolism; 4-amino-4-deoxy-beta-L-arabinose-lipid A biosynthesis. Its function is as follows. Catalyzes the transfer of the L-Ara4N moiety of the glycolipid undecaprenyl phosphate-alpha-L-Ara4N to lipid A. The modified arabinose is attached to lipid A and is required for resistance to polymyxin and cationic antimicrobial peptides. The protein is Undecaprenyl phosphate-alpha-4-amino-4-deoxy-L-arabinose arabinosyl transferase of Pseudomonas savastanoi pv. phaseolicola (strain 1448A / Race 6) (Pseudomonas syringae pv. phaseolicola (strain 1448A / Race 6)).